A 50-amino-acid polypeptide reads, in one-letter code: Large ribosomal subunit protein bL33B (50 aa).

This sequence belongs to the bacterial ribosomal protein bL33 family.

This chain is Large ribosomal subunit protein bL33B, found in Streptococcus pneumoniae (strain ATCC BAA-255 / R6).